The chain runs to 238 residues: 14-3-3 protein 2 (238 aa).

The protein belongs to the 14-3-3 family.

Functionally, probable adapter protein. This chain is 14-3-3 protein 2, found in Entamoeba histolytica (strain ATCC 30459 / HM-1:IMSS / ABRM).